The following is a 115-amino-acid chain: Transcription initiation factor IIA subunit 2 (115 aa).

This sequence belongs to the TFIIA subunit 2 family. In terms of assembly, TFIIA is a heterodimer of the large unprocessed subunit 1 and a small subunit gamma.

The protein localises to the nucleus. In terms of biological role, TFIIA is a component of the transcription machinery of RNA polymerase II and plays an important role in transcriptional activation. TFIIA in a complex with tbp mediates transcriptional activity. This Dictyostelium discoideum (Social amoeba) protein is Transcription initiation factor IIA subunit 2 (gtf2a2).